The following is a 110-amino-acid chain: Integration host factor subunit alpha (110 aa).

The protein belongs to the bacterial histone-like protein family. As to quaternary structure, heterodimer of an alpha and a beta chain.

This protein is one of the two subunits of integration host factor, a specific DNA-binding protein that functions in genetic recombination as well as in transcriptional and translational control. The protein is Integration host factor subunit alpha of Delftia acidovorans (strain DSM 14801 / SPH-1).